The chain runs to 96 residues: UPF0235 protein YggU (96 aa).

Belongs to the UPF0235 family.

This is UPF0235 protein YggU from Salmonella typhimurium (strain LT2 / SGSC1412 / ATCC 700720).